The primary structure comprises 497 residues: Dol-P-Man:Man(7)GlcNAc(2)-PP-Dol alpha-1,6-mannosyltransferase (497 aa).

The next 7 helical transmembrane spans lie at 10-30 (FLQSYGYDLILGSVAAIYVVM), 71-91 (FIGAFIVSVFASPVVSIISCL), 92-112 (GFPKVYSLVAARLVLGCIILS), 125-145 (FGNQVETFFVLFTSLQFHFLF), 154-174 (ILALGLVNLAYGNWLKGNFYP), 178-198 (FLIFATVIFRCDTMLLLGPIG), and 215-235 (YCVGTALLAVGLTIFVDSIMW). N-linked (GlcNAc...) asparagine glycosylation is present at Asn-253. A run of 4 helical transmembrane segments spans residues 263–285 (IHWYFTSALPRSLLVAYPLSLLG), 292–312 (VPFFIVPVLSFVILYSKLPHK), 316–336 (FIISSVPMFNLSAAVAASRIY), and 346–366 (LVNMVMLAFFAISAGCTVVTF). Asn-435 carries an N-linked (GlcNAc...) asparagine glycan.

It belongs to the glycosyltransferase 22 family.

It is found in the endoplasmic reticulum membrane. The catalysed reaction is an alpha-D-Man-(1-&gt;2)-alpha-D-Man-(1-&gt;2)-alpha-D-Man-(1-&gt;3)-[alpha-D-Man-(1-&gt;2)-alpha-D-Man-(1-&gt;3)-alpha-D-Man-(1-&gt;6)]-beta-D-Man-(1-&gt;4)-beta-D-GlcNAc-(1-&gt;4)-alpha-D-GlcNAc-diphospho-di-trans,poly-cis-dolichol + a di-trans,poly-cis-dolichyl beta-D-mannosyl phosphate = an alpha-D-Man-(1-&gt;2)-alpha-D-Man-(1-&gt;2)-alpha-D-Man-(1-&gt;3)-[alpha-D-Man-(1-&gt;2)-alpha-D-Man-(1-&gt;3)-[alpha-D-Man-(1-&gt;6)]-alpha-D-Man-(1-&gt;6)]-beta-D-Man-(1-&gt;4)-beta-D-GlcNAc-(1-&gt;4)-alpha-D-GlcNAc-diphospho-di-trans,poly-cis-dolichol + a di-trans,poly-cis-dolichyl phosphate + H(+). It functions in the pathway protein modification; protein glycosylation. Functionally, mannosyltransferase that operates in the biosynthetic pathway of dolichol-linked oligosaccharides, the glycan precursors employed in protein asparagine (N)-glycosylation. The assembly of dolichol-linked oligosaccharides begins on the cytosolic side of the endoplasmic reticulum membrane and finishes in its lumen. The sequential addition of sugars to dolichol pyrophosphate produces dolichol-linked oligosaccharides containing fourteen sugars, including two GlcNAcs, nine mannoses and three glucoses. Once assembled, the oligosaccharide is transferred from the lipid to nascent proteins by oligosaccharyltransferases. In the lumen of the endoplasmic reticulum, adds the eighth mannose residue in an alpha-1,6 linkage onto Man(7)GlcNAc(2)-PP-dolichol to produce Man(8)GlcNAc(2)-PP-dolichol. In Arabidopsis thaliana (Mouse-ear cress), this protein is Dol-P-Man:Man(7)GlcNAc(2)-PP-Dol alpha-1,6-mannosyltransferase (ALG12).